The sequence spans 105 residues: N(2)-fixation sustaining protein CowN (105 aa).

Belongs to the CowN family.

Is required to sustain N(2)-dependent growth in the presence of low levels of carbon monoxide (CO). Probably acts by protecting the N(2) fixation ability of the nitrogenase complex, which is inactivated in the presence of CO. The polypeptide is N(2)-fixation sustaining protein CowN (Tolumonas auensis (strain DSM 9187 / NBRC 110442 / TA 4)).